Consider the following 510-residue polypeptide: Bifunctional purine biosynthesis protein PurH (510 aa).

An MGS-like domain is found at 1-143; the sequence is MTKRALISVS…KNHDAVLVLV (143 aa).

The protein belongs to the PurH family.

The catalysed reaction is (6R)-10-formyltetrahydrofolate + 5-amino-1-(5-phospho-beta-D-ribosyl)imidazole-4-carboxamide = 5-formamido-1-(5-phospho-D-ribosyl)imidazole-4-carboxamide + (6S)-5,6,7,8-tetrahydrofolate. It carries out the reaction IMP + H2O = 5-formamido-1-(5-phospho-D-ribosyl)imidazole-4-carboxamide. It functions in the pathway purine metabolism; IMP biosynthesis via de novo pathway; 5-formamido-1-(5-phospho-D-ribosyl)imidazole-4-carboxamide from 5-amino-1-(5-phospho-D-ribosyl)imidazole-4-carboxamide (10-formyl THF route): step 1/1. The protein operates within purine metabolism; IMP biosynthesis via de novo pathway; IMP from 5-formamido-1-(5-phospho-D-ribosyl)imidazole-4-carboxamide: step 1/1. This is Bifunctional purine biosynthesis protein PurH from Deinococcus radiodurans (strain ATCC 13939 / DSM 20539 / JCM 16871 / CCUG 27074 / LMG 4051 / NBRC 15346 / NCIMB 9279 / VKM B-1422 / R1).